We begin with the raw amino-acid sequence, 527 residues long: Zinc finger imprinted 2 (527 aa).

Over residues 1–16 the composition is skewed to acidic residues; that stretch reads MYQPEDDNNSDVTSDD. Residues 1–104 form a disordered region; sequence MYQPEDDNNS…SRSQDAESYQ (104 aa). 3 stretches are compositionally biased toward basic and acidic residues: residues 17–26, 35–56, and 80–99; these read DMTRNRRESS, SGDR…DRWS, and FEMD…RSQD. The KRAB domain occupies 176–246; that stretch reads VTFEDVLVDF…ETDSRHTVIC (71 aa). Residues 247 to 322 are disordered; it reads QGESHDDPLE…GICTSPQSAS (76 aa). Residues 259–275 are compositionally biased toward polar residues; it reads QGNQEKLLTPITMNDPK. The segment covering 297–307 has biased composition (basic and acidic residues); it reads QSKDPLGKDPQ. 5 C2H2-type zinc fingers span residues 328–350, 356–378, 412–434, 466–488, and 494–516; these read NRCE…ERIH, YECK…QKTH, FECF…LKAH, CQCC…YRTH, and YQCQ…YQLH.

It belongs to the krueppel C2H2-type zinc-finger protein family. Highest levels of expression in adult testis; modest levels in fetal kidney and brain.

The protein resides in the nucleus. In terms of biological role, may be involved in transcriptional regulation. This is Zinc finger imprinted 2 (ZIM2) from Homo sapiens (Human).